Here is a 506-residue protein sequence, read N- to C-terminus: ATP synthase subunit alpha (506 aa).

Residue 170-177 coordinates ATP; the sequence is GDRQTGKT.

This sequence belongs to the ATPase alpha/beta chains family. In terms of assembly, F-type ATPases have 2 components, CF(1) - the catalytic core - and CF(0) - the membrane proton channel. CF(1) has five subunits: alpha(3), beta(3), gamma(1), delta(1), epsilon(1). CF(0) has four main subunits: a(1), b(1), b'(1) and c(9-12).

It localises to the cellular thylakoid membrane. It catalyses the reaction ATP + H2O + 4 H(+)(in) = ADP + phosphate + 5 H(+)(out). Produces ATP from ADP in the presence of a proton gradient across the membrane. The alpha chain is a regulatory subunit. This Synechococcus sp. (strain JA-3-3Ab) (Cyanobacteria bacterium Yellowstone A-Prime) protein is ATP synthase subunit alpha.